A 169-amino-acid polypeptide reads, in one-letter code: Probable phospholipid hydroperoxide glutathione peroxidase (169 aa).

C43 is a catalytic residue.

The protein belongs to the glutathione peroxidase family. Monomer. Has a tendency to form higher mass oligomers. Interacts with FUNDC1; this interaction promotes GPX4 recruitment into mitochondria through TOM/TIM complex where it is degraded by mitophagy.

The protein resides in the cytoplasm. It catalyses the reaction a hydroperoxy polyunsaturated fatty acid + 2 glutathione = a hydroxy polyunsaturated fatty acid + glutathione disulfide + H2O. In terms of biological role, protects cells and enzymes from oxidative damage, by catalyzing the reduction of hydrogen peroxide, lipid peroxides and organic hydroperoxide, by glutathione. This chain is Probable phospholipid hydroperoxide glutathione peroxidase (GPXle-1), found in Solanum lycopersicum (Tomato).